Consider the following 537-residue polypeptide: Glutamate--tRNA ligase (537 aa).

The short motif at 9 to 19 (PSPTGLQHIGG) is the 'HIGH' region element. The Zn(2+) site is built by Cys125, Cys127, Cys152, and Glu154. Residues 270–274 (KLSKR) carry the 'KMSKS' region motif. Lys273 provides a ligand contact to ATP.

It belongs to the class-I aminoacyl-tRNA synthetase family. Glutamate--tRNA ligase type 1 subfamily. Monomer. Zn(2+) is required as a cofactor.

The protein localises to the cytoplasm. It carries out the reaction tRNA(Glu) + L-glutamate + ATP = L-glutamyl-tRNA(Glu) + AMP + diphosphate. Catalyzes the attachment of glutamate to tRNA(Glu) in a two-step reaction: glutamate is first activated by ATP to form Glu-AMP and then transferred to the acceptor end of tRNA(Glu). This chain is Glutamate--tRNA ligase, found in Treponema pallidum (strain Nichols).